The sequence spans 194 residues: Fe/S biogenesis protein NfuA (194 aa).

Positions 152 and 155 each coordinate [4Fe-4S] cluster.

Belongs to the NfuA family. In terms of assembly, homodimer. Requires [4Fe-4S] cluster as cofactor.

Involved in iron-sulfur cluster biogenesis. Binds a 4Fe-4S cluster, can transfer this cluster to apoproteins, and thereby intervenes in the maturation of Fe/S proteins. Could also act as a scaffold/chaperone for damaged Fe/S proteins. The sequence is that of Fe/S biogenesis protein NfuA from Azotobacter vinelandii (strain DJ / ATCC BAA-1303).